Here is a 400-residue protein sequence, read N- to C-terminus: uncharacterized protein (400 aa).

Residues 161-380 (NDLLNIIDIV…YVVKVIVMRL (220 aa)) enclose the TR mART core domain.

This is an uncharacterized protein from Acanthamoeba polyphaga (Amoeba).